Here is a 355-residue protein sequence, read N- to C-terminus: Epoxide hydrolase 2 (355 aa).

The region spanning 78–323 is the AB hydrolase-1 domain; that stretch reads VLLMVHGFPE…IRGASHWVQQ (246 aa). D152 functions as the Nucleophile in the catalytic mechanism. Y263 acts as the Proton donor in catalysis. H319 serves as the catalytic Proton acceptor.

Belongs to the AB hydrolase superfamily. Epoxide hydrolase family.

It catalyses the reaction an epoxide + H2O = an ethanediol. It participates in lipid metabolism. Its function is as follows. Catalyzes the hydrolysis of epoxide-containing fatty acids. Active in vitro against trans-1,3-diphenylpropene oxide (t-DPPO), epoxyeicosatrienoic acids (EETs) including 8,9-EET, 11,12-EET and 14,15-EET and the linoleic acid metabolites 12,13-epoxy-9-octadecenoate (12,13-EpOME) and 9,10-epoxy-12-octadecenoate (9,10-EpOME). The chain is Epoxide hydrolase 2 from Caenorhabditis elegans.